The chain runs to 281 residues: tRNA N(3)-cytidine methyltransferase METTL8, mitochondrial (281 aa).

A mitochondrion-targeting transit peptide spans 1–22; it reads MNVIWRSCICRLRQGKVPHRCQ. A Glycyl lysine isopeptide (Lys-Gly) (interchain with G-Cter in SUMO) cross-link involves residue lysine 80. Residues tryptophan 89 and tyrosine 93 each contribute to the S-adenosyl-L-methionine site. Over residues 139–151 the composition is skewed to polar residues; it reads RTQGTETHCQESF. The segment at 139-180 is disordered; it reads RTQGTETHCQESFVSPEPGSRGRSAPDPDLEEYSKGPGKTEP. S-adenosyl-L-methionine-binding residues include glycine 194, aspartate 220, and aspartate 246.

The protein belongs to the methyltransferase superfamily. METL family. Interacts with EP300. In terms of tissue distribution, absent in embryonic lung but is induced in a fibroblast cell line by stretch. Expressed in undifferentiated progenitor cells, while its expression is inhibited by stretch. As to expression, absent in undifferentiated embryonic lung mesenchymal cells, but expression is induced by stretch. In terms of tissue distribution, expressed in mature adipose tissue.

The protein resides in the mitochondrion. Its subcellular location is the cytoplasm. The protein localises to the nucleus. It catalyses the reaction cytidine(32) in tRNA(Ser) + S-adenosyl-L-methionine = N(3)-methylcytidine(32) in tRNA(Ser) + S-adenosyl-L-homocysteine + H(+). The enzyme catalyses cytidine(32) in tRNA(Thr) + S-adenosyl-L-methionine = N(3)-methylcytidine(32) in tRNA(Thr) + S-adenosyl-L-homocysteine + H(+). The catalysed reaction is a cytidine in mRNA + S-adenosyl-L-methionine = an N(3)-methylcytidine in mRNA + S-adenosyl-L-homocysteine + H(+). Mitochondrial S-adenosyl-L-methionine-dependent methyltransferase that mediates N(3)-methylcytidine modification of residue 32 of the tRNA anticodon loop of mitochondrial tRNA(Ser)(UCN) and tRNA(Thr). N(3)-methylcytidine methylation modification regulates mitochondrial translation efficiency and is required for activity of the respiratory chain. N(3)-methylcytidine methylation of mitochondrial tRNA(Ser)(UCN) requires the formation of N(6)-dimethylallyladenosine(37) (i6A37) by TRIT1 as prerequisite. May also mediate N(3)-methylcytidine modification of mRNAs. The existence of N(3)-methylcytidine modification on mRNAs is however unclear, and additional evidences are required to confirm the role of the N(3)-methylcytidine-specific mRNA methyltransferase activity of METTL8 in vivo. Functionally, overexpression in lung progenitor cells stimulates smooth muscle-specific gene expression and suppresses adipogenic gene expression. In terms of biological role, stimulates adipogenesis. The chain is tRNA N(3)-cytidine methyltransferase METTL8, mitochondrial from Mus musculus (Mouse).